We begin with the raw amino-acid sequence, 294 residues long: MFQGVYTAIITPFKNDKIDYDSYNKLLEKQIKAGVNGVVPCGTTGESPTLSHTEHAELIRETVKAVQGKIQVVAGTGSNSTREAIELTEAACKDSVDGILSVNPYYNKPTQEGLFQHFQAVAEHSSVPVMLYNIPGRTSINLQPETVFRLSEIKRIRSMKEATGDLGQMGKLISLVGNKMTVLSGDDNLTLPLLAIGGVGVVSVVSNLFPKAMVEMVKYFQDGKVIEARKIHYDFIEAFALAFMETNPIPIKAAMSWFGHCEPEIRLPLTRLSQNETSVKFKKALEVLKEKGYE.

Thr-44 provides a ligand contact to pyruvate. Tyr-132 serves as the catalytic Proton donor/acceptor. Lys-160 acts as the Schiff-base intermediate with substrate in catalysis. Val-202 contributes to the pyruvate binding site.

The protein belongs to the DapA family. As to quaternary structure, homotetramer; dimer of dimers.

It is found in the cytoplasm. It carries out the reaction L-aspartate 4-semialdehyde + pyruvate = (2S,4S)-4-hydroxy-2,3,4,5-tetrahydrodipicolinate + H2O + H(+). Its pathway is amino-acid biosynthesis; L-lysine biosynthesis via DAP pathway; (S)-tetrahydrodipicolinate from L-aspartate: step 3/4. Functionally, catalyzes the condensation of (S)-aspartate-beta-semialdehyde [(S)-ASA] and pyruvate to 4-hydroxy-tetrahydrodipicolinate (HTPA). The polypeptide is 4-hydroxy-tetrahydrodipicolinate synthase (Leptospira borgpetersenii serovar Hardjo-bovis (strain JB197)).